Here is a 799-residue protein sequence, read N- to C-terminus: High affinity nerve growth factor receptor (799 aa).

The N-terminal stretch at 1–32 (MLRGQRHGQLGWHRPAAGLGGLVTSLMLACAC) is a signal peptide. At 33 to 418 (AASCRETCCP…DPVEKKDETP (386 aa)) the chain is on the extracellular side. Intrachain disulfides connect Cys36-Cys41 and Cys40-Cys50. The N-linked (GlcNAc...) asparagine glycan is linked to Asn67. 2 LRR repeats span residues 90–113 (LGEL…AFHF) and 116–137 (RLSH…TVQG). N-linked (GlcNAc...) asparagine glycans are attached at residues Asn121, Asn190, Asn204, Asn255, Asn264, Asn320, Asn325, Asn341, Asn361, and Asn404. In terms of domain architecture, LRRCT spans 148 to 219 (NPLHCSCALL…GDDVFLQCQV (72 aa)). An intrachain disulfide couples Cys154 to Cys193. Ig-like C2-type domains follow at residues 196-285 (PSVK…VSVS) and 295-368 (AVEQ…LAAN). 2 disulfide bridges follow: Cys217/Cys267 and Cys302/Cys348. The chain crosses the membrane as a helical span at residues 419-442 (FGVSVAVGLAVSAALFLSALLLVL). Over 443–799 (NKCGQRSKFG…APPSYLDVLG (357 aa)) the chain is Cytoplasmic. Residues 472–493 (MTLGGSSLSPTEGKGSGLQGHI) are interaction with SQSTM1. Tyr499 is subject to Phosphotyrosine; by autocatalysis. The Protein kinase domain occupies 513–784 (IILKWELGEG…LSMKDVHARL (272 aa)). ATP is bound by residues 519–527 (LGEGAFGKV) and Lys547. Asp653 serves as the catalytic Proton acceptor. A phosphotyrosine; by autocatalysis mark is found at Tyr679, Tyr683, Tyr684, and Tyr794.

Belongs to the protein kinase superfamily. Tyr protein kinase family. Insulin receptor subfamily. As to quaternary structure, exists in a dynamic equilibrium between monomeric (low affinity) and dimeric (high affinity) structures. Homodimerization is induced by binding of a NGF dimer. Found in a complex, at least composed of KIDINS220, MAGI2, NTRK1 and RAPGEF2; the complex is mainly formed at late endosomes in a nerve growth factor (NGF)-dependent manner. Interacts with RAPGEF2; the interaction is strengthened after NGF stimulation. Interacts with SQSTM1; bridges NTRK1 to NGFR. Forms a ternary complex with NGFR and KIDINS220; this complex is affected by the expression levels of KIDINS220 and an increase in KIDINS220 expression leads to a decreased association of NGFR and NTRK1. Interacts (phosphorylated upon activation by NGF) with SHC1; mediates SHC1 phosphorylation and activation. Interacts (phosphorylated upon activation by NGF) with PLCG1; mediates PLCG1 phosphorylation and activation. Interacts (phosphorylated) with SH2B1 and SH2B2. Interacts with GRB2. Interacts with PIK3R1. Interacts with FRS2. Interacts with SORT1; may regulate NTRK1 anterograde axonal transport. Interacts with SH2D1A; regulates NTRK1. Interacts with NRADD. Interacts with RAB7A. Interacts with PTPRS. Interacts with USP36; USP36 does not deubiquitinate NTRK1. Interacts with GGA3. Interacts with TSPAN1; this interaction promotes NTRK1 stability. Ligand-mediated autophosphorylation. Interaction with SQSTM1 is phosphotyrosine-dependent. Autophosphorylation at Tyr-499 mediates interaction and phosphorylation of SHC1. In terms of processing, N-glycosylated. Post-translationally, ubiquitinated. Undergoes polyubiquitination upon activation; regulated by NGFR. Ubiquitination by NEDD4L leads to degradation. Ubiquitination regulates the internalization of the receptor. Isoform Trka-II is primarily expressed in neuronal cells; isoform Trka-I is found in non-neuronal tissues.

It is found in the cell membrane. The protein localises to the early endosome membrane. It localises to the late endosome membrane. Its subcellular location is the recycling endosome membrane. The enzyme catalyses L-tyrosyl-[protein] + ATP = O-phospho-L-tyrosyl-[protein] + ADP + H(+). Its activity is regulated as follows. The pro-survival signaling effect of NTRK1 in neurons requires its endocytosis into signaling early endosomes and its retrograde axonal transport. This is regulated by different proteins including CFL1, RAC1 and SORT1. NTF3 is unable to induce this signaling probably due to the lability of the NTF3-NTRK1 complex in endosomes. SH2D1A inhibits the autophosphorylation of the receptor, and alters the recruitment and activation of downstream effectors and signaling cascades. Regulated by NGFR. Receptor tyrosine kinase involved in the development and the maturation of the central and peripheral nervous systems through regulation of proliferation, differentiation and survival of sympathetic and nervous neurons. High affinity receptor for NGF which is its primary ligand. Can also bind and be activated by NTF3/neurotrophin-3. However, NTF3 only supports axonal extension through NTRK1 but has no effect on neuron survival. Upon dimeric NGF ligand-binding, undergoes homodimerization, autophosphorylation and activation. Recruits, phosphorylates and/or activates several downstream effectors including SHC1, FRS2, SH2B1, SH2B2 and PLCG1 that regulate distinct overlapping signaling cascades driving cell survival and differentiation. Through SHC1 and FRS2 activates a GRB2-Ras-MAPK cascade that regulates cell differentiation and survival. Through PLCG1 controls NF-Kappa-B activation and the transcription of genes involved in cell survival. Through SHC1 and SH2B1 controls a Ras-PI3 kinase-AKT1 signaling cascade that is also regulating survival. In absence of ligand and activation, may promote cell death, making the survival of neurons dependent on trophic factors. This chain is High affinity nerve growth factor receptor (Ntrk1), found in Rattus norvegicus (Rat).